Here is a 641-residue protein sequence, read N- to C-terminus: Soluble starch synthase 1, chloroplastic/amyloplastic (641 aa).

Residues 1 to 113 (MATAAGMGIG…DSIDKTIFVA (113 aa)) constitute a chloroplast transit peptide. Positions 62-96 (TFLVPTSTPPAPTQSPAPAPTPPPLPDSGVGEIEP) are disordered. Pro residues predominate over residues 68 to 87 (STPPAPTQSPAPAPTPPPLP). K147 is a binding site for ADP-alpha-D-glucose.

Belongs to the glycosyltransferase 1 family. Bacterial/plant glycogen synthase subfamily. Leaves and immature seeds.

It is found in the plastid. The protein resides in the chloroplast. The protein localises to the amyloplast. The catalysed reaction is [(1-&gt;4)-alpha-D-glucosyl](n) + ADP-alpha-D-glucose = [(1-&gt;4)-alpha-D-glucosyl](n+1) + ADP + H(+). It functions in the pathway glycan biosynthesis; starch biosynthesis. Involved in starch synthesis in endosperm amyloplasts. Plays a role in the elongation of amylopectin chains. Synthesizes preferentially amylopectin chains with a degree of polymerization (DP) of 7 to 11 by elongating chains with a DP of 4 to 7. Generates distincly chains with a DP of 8 to 12 chains from short chains with a DP of 6 to 7. This Oryza sativa subsp. japonica (Rice) protein is Soluble starch synthase 1, chloroplastic/amyloplastic.